The primary structure comprises 230 residues: Demethylmenaquinone methyltransferase (230 aa).

Residues Thr57, Asp77, 101-102 (DI), and Ser118 contribute to the S-adenosyl-L-methionine site.

This sequence belongs to the class I-like SAM-binding methyltransferase superfamily. MenG/UbiE family.

The catalysed reaction is a 2-demethylmenaquinol + S-adenosyl-L-methionine = a menaquinol + S-adenosyl-L-homocysteine + H(+). The protein operates within quinol/quinone metabolism; menaquinone biosynthesis; menaquinol from 1,4-dihydroxy-2-naphthoate: step 2/2. In terms of biological role, methyltransferase required for the conversion of demethylmenaquinol (DMKH2) to menaquinol (MKH2). The chain is Demethylmenaquinone methyltransferase from Chlamydia caviae (strain ATCC VR-813 / DSM 19441 / 03DC25 / GPIC) (Chlamydophila caviae).